Reading from the N-terminus, the 326-residue chain is Protease inhibitor (326 aa).

The signal sequence occupies residues 1-24 (MKTIRTGMMTLAALAVLGTNVVSA). A run of 2 repeats spans residues 177 to 208 (IILHVDKETKITTADGKELKPEDLQLGMEVEA) and 272 to 304 (VALIVGKDTKIVSAKDNKELAPEDLKAEMKVFA). The interval 177–304 (IILHVDKETK…DLKAEMKVFA (128 aa)) is 2 X 32 AA approximate repeats.

In terms of processing, proteolytically cleaved to yield at least three forms (BBRPI-A, -B, and -C).

It is found in the secreted. Its function is as follows. Shows inhibitory activity towards serine proteases, such as trypsin, chymotrypsin and subtilisin. May form a trypsin-inhibitor complex in a molar ratio of 1:1. The sequence is that of Protease inhibitor from Brevibacillus choshinensis.